A 308-amino-acid polypeptide reads, in one-letter code: Ribonuclease H2 subunit B (308 aa).

A2 bears the N-acetylalanine mark. K292 is subject to N6-acetyllysine. S293 carries the post-translational modification Phosphoserine.

Belongs to the RNase H2 subunit B family. The RNase H2 complex is a heterotrimer composed of the catalytic subunit RNASEH2A and the non-catalytic subunits RNASEH2B and RNASEH2C.

The protein resides in the nucleus. Functionally, non catalytic subunit of RNase H2, an endonuclease that specifically degrades the RNA of RNA:DNA hybrids. Participates in DNA replication, possibly by mediating the removal of lagging-strand Okazaki fragment RNA primers during DNA replication. Mediates the excision of single ribonucleotides from DNA:RNA duplexes. This is Ribonuclease H2 subunit B (Rnaseh2b) from Mus musculus (Mouse).